A 331-amino-acid polypeptide reads, in one-letter code: Pyrimidine monooxygenase RutA (331 aa).

FMN is bound by residues 79-80, Asn145, Glu154, 170-171, and Ser220; these read IK and RY. The disordered stretch occupies residues 300–331; it reads WLTEQSQKDTRSGTDTNVRQMADPTSASAFNH. The span at 312–331 shows a compositional bias: polar residues; it reads GTDTNVRQMADPTSASAFNH.

This sequence belongs to the NtaA/SnaA/DszA monooxygenase family. RutA subfamily.

The catalysed reaction is uracil + FMNH2 + NADH + O2 = (Z)-3-ureidoacrylate + FMN + NAD(+) + H2O + H(+). The enzyme catalyses thymine + FMNH2 + NADH + O2 = (Z)-2-methylureidoacrylate + FMN + NAD(+) + H2O + H(+). In terms of biological role, catalyzes the pyrimidine ring opening between N-3 and C-4 by an unusual flavin hydroperoxide-catalyzed mechanism, adding oxygen atoms in the process to yield ureidoacrylate peracid, that immediately reacts with FMN forming ureidoacrylate and FMN-N(5)-oxide. The FMN-N(5)-oxide reacts spontaneously with NADH to produce FMN. Requires the flavin reductase RutF to regenerate FMN in vivo. The polypeptide is Pyrimidine monooxygenase RutA (Escherichia coli O7:K1 (strain IAI39 / ExPEC)).